Consider the following 152-residue polypeptide: MQRTLVLLKPDCVQRRLIGDVLSRFEAKGLHIVAMKLLQVTPELSKQHYAEHVEKPFYPSLEEFITSAPVVAIALEGLEVIRVVRDMLGATNGLQAAPGTLRGDYSSSRQMNLVHASDSEESAQRELDLYFNADEFCDYSLVLTPFMRADDE.

Lys-9, Phe-57, Arg-85, Thr-91, Arg-102, and Asn-112 together coordinate ATP. Catalysis depends on His-115, which acts as the Pros-phosphohistidine intermediate.

This sequence belongs to the NDK family. In terms of assembly, homotetramer. It depends on Mg(2+) as a cofactor.

It localises to the cytoplasm. The enzyme catalyses a 2'-deoxyribonucleoside 5'-diphosphate + ATP = a 2'-deoxyribonucleoside 5'-triphosphate + ADP. It carries out the reaction a ribonucleoside 5'-diphosphate + ATP = a ribonucleoside 5'-triphosphate + ADP. In terms of biological role, major role in the synthesis of nucleoside triphosphates other than ATP. The ATP gamma phosphate is transferred to the NDP beta phosphate via a ping-pong mechanism, using a phosphorylated active-site intermediate. The protein is Nucleoside diphosphate kinase of Rhodopirellula baltica (strain DSM 10527 / NCIMB 13988 / SH1).